The primary structure comprises 405 residues: Nicotinate phosphoribosyltransferase (405 aa).

H230 carries the phosphohistidine; by autocatalysis modification.

The protein belongs to the NAPRTase family. In terms of processing, transiently phosphorylated on a His residue during the reaction cycle. Phosphorylation strongly increases the affinity for substrates and increases the rate of nicotinate D-ribonucleotide production. Dephosphorylation regenerates the low-affinity form of the enzyme, leading to product release.

It catalyses the reaction nicotinate + 5-phospho-alpha-D-ribose 1-diphosphate + ATP + H2O = nicotinate beta-D-ribonucleotide + ADP + phosphate + diphosphate. Its pathway is cofactor biosynthesis; NAD(+) biosynthesis; nicotinate D-ribonucleotide from nicotinate: step 1/1. Functionally, catalyzes the synthesis of beta-nicotinate D-ribonucleotide from nicotinate and 5-phospho-D-ribose 1-phosphate at the expense of ATP. The chain is Nicotinate phosphoribosyltransferase from Bordetella bronchiseptica (strain ATCC BAA-588 / NCTC 13252 / RB50) (Alcaligenes bronchisepticus).